The following is a 416-amino-acid chain: GTPase ERA1, chloroplastic (416 aa).

The N-terminal 53 residues, 1–53, are a transit peptide targeting the chloroplast; that stretch reads MELGLALRLVAPPPLLPCLSRRALSLPPDFVSSRVLRGRRIHASRLKHGAGVV. Residues 117-287 enclose the Era-type G domain; it reads RSGYVAVLGK…KEWILSKLPL (171 aa). The interval 125 to 132 is G1; that stretch reads GKPNVGKS. 125-132 is a GTP binding site; it reads GKPNVGKS. Residues 151 to 155 form a G2 region; the sequence is QTTRH. Residues 172-175 form a G3 region; sequence DTPG. GTP contacts are provided by residues 172–176 and 237–240; these read DTPGV and NKKD. Positions 237-240 are G4; sequence NKKD. The G5 stretch occupies residues 266–268; it reads ISA. The KH type-2 domain maps to 318–395; that stretch reads YRQEIPYSCQ…YLEVEVKVKE (78 aa).

The protein belongs to the TRAFAC class TrmE-Era-EngA-EngB-Septin-like GTPase superfamily. Era GTPase family.

Its subcellular location is the plastid. The protein resides in the chloroplast stroma. It is found in the chloroplast nucleoid. In terms of biological role, nuclear genome-encoded probable GTPase involved in ribosome biogenesis in chloroplasts. Plays a role in 16S rRNA maturation in plastids and may contribute to the assembly of the small (30S) ribosomal subunit. The polypeptide is GTPase ERA1, chloroplastic (Zea mays (Maize)).